A 423-amino-acid polypeptide reads, in one-letter code: G protein-activated inward rectifier potassium channel 2 (423 aa).

The Cytoplasmic segment spans residues 1–89 (MAKLTESMTN…IFTTLVDLKW (89 aa)). 2 positions are modified to phosphoserine: serine 16 and serine 23. A helical membrane pass occupies residues 90–114 (RFNLLIFVMVYTVTWLFFGMIWWLI). Residues 115–138 (AYIRGDMDHIEDPSWTPCVTNLNG) are Extracellular-facing. The segment at residues 139–150 (FVSAFLFSIETE) is an intramembrane region (helical; Pore-forming). Positions 151-157 (TTIGYGY) form an intramembrane region, pore-forming. A Selectivity filter motif is present at residues 152-157 (TIGYGY). The Extracellular portion of the chain corresponds to 158–166 (RVITDKCPE). The chain crosses the membrane as a helical span at residues 167–188 (GIILLLIQSVLGSIVNAFMVGC). The Cytoplasmic segment spans residues 189-423 (MFVKISQPKK…VANLENESKV (235 aa)). The interval 390–423 (NQHAELETEEEEKNLEEQTERNGDVANLENESKV) is disordered. Positions 420-423 (ESKV) match the PDZ-binding motif.

This sequence belongs to the inward rectifier-type potassium channel (TC 1.A.2.1) family. KCNJ6 subfamily. In terms of assembly, associates with KCNJ3/GIRK1 or KCNJ5/GRIK4 to form a G-protein-activated heteromultimer pore-forming unit. The resulting inward current is much larger. Interacts (via PDZ-binding motif) with SNX27 (via PDZ domain); the interaction is required when endocytosed to prevent degradation in lysosomes and promote recycling to the plasma membrane.

The protein resides in the membrane. The enzyme catalyses K(+)(in) = K(+)(out). Activated by phosphatidylinositol 4,5 biphosphate (PtdIns(4,5)P2). Functionally, inward rectifier potassium channels are characterized by a greater tendency to allow potassium to flow into the cell rather than out of it. Their voltage dependence is regulated by the concentration of extracellular potassium; as external potassium is raised, the voltage range of the channel opening shifts to more positive voltages. The inward rectification is mainly due to the blockage of outward current by internal magnesium. This potassium channel may be involved in the regulation of insulin secretion by glucose and/or neurotransmitters acting through G-protein-coupled receptors. This is G protein-activated inward rectifier potassium channel 2 (KCNJ6) from Pongo abelii (Sumatran orangutan).